The sequence spans 109 residues: Thiosulfate sulfurtransferase GlpE (109 aa).

One can recognise a Rhodanese domain in the interval 16–104; sequence REQGAVVVDV…WRTTFPSETA (89 aa). Catalysis depends on C64, which acts as the Cysteine persulfide intermediate.

This sequence belongs to the GlpE family.

The protein resides in the cytoplasm. The enzyme catalyses thiosulfate + hydrogen cyanide = thiocyanate + sulfite + 2 H(+). The catalysed reaction is thiosulfate + [thioredoxin]-dithiol = [thioredoxin]-disulfide + hydrogen sulfide + sulfite + 2 H(+). In terms of biological role, transferase that catalyzes the transfer of sulfur from thiosulfate to thiophilic acceptors such as cyanide or dithiols. May function in a CysM-independent thiosulfate assimilation pathway by catalyzing the conversion of thiosulfate to sulfite, which can then be used for L-cysteine biosynthesis. This chain is Thiosulfate sulfurtransferase GlpE, found in Pseudomonas fluorescens (strain Pf0-1).